The primary structure comprises 340 residues: uncharacterized protein (340 aa).

Positions 1-20 are cleaved as a signal peptide; the sequence is MGGARRLKLDGSIPNQLARA.

This is an uncharacterized protein from Mycobacterium tuberculosis (strain CDC 1551 / Oshkosh).